The chain runs to 436 residues: 3-ketoacyl-CoA thiolase (436 aa).

Cys-99 (acyl-thioester intermediate) is an active-site residue. Catalysis depends on proton acceptor residues His-392 and Cys-422.

This sequence belongs to the thiolase-like superfamily. Thiolase family. Heterotetramer of two alpha chains (FadJ) and two beta chains (FadI).

The protein resides in the cytoplasm. It catalyses the reaction an acyl-CoA + acetyl-CoA = a 3-oxoacyl-CoA + CoA. Its pathway is lipid metabolism; fatty acid beta-oxidation. Its function is as follows. Catalyzes the final step of fatty acid oxidation in which acetyl-CoA is released and the CoA ester of a fatty acid two carbons shorter is formed. This chain is 3-ketoacyl-CoA thiolase, found in Serratia proteamaculans (strain 568).